The following is a 259-amino-acid chain: Proteasome subunit alpha type-7 (259 aa).

This sequence belongs to the peptidase T1A family. The 26S proteasome consists of a 20S proteasome core and two 19S regulatory subunits. The 20S proteasome core is composed of 28 subunits that are arranged in four stacked rings, resulting in a barrel-shaped structure. The two end rings are each formed by seven alpha subunits, and the two central rings are each formed by seven beta subunits. The catalytic chamber with the active sites is on the inside of the barrel.

The protein resides in the cytoplasm. The protein localises to the nucleus. The proteasome is a multicatalytic proteinase complex which is characterized by its ability to cleave peptides with Arg, Phe, Tyr, Leu, and Glu adjacent to the leaving group at neutral or slightly basic pH. The proteasome has an ATP-dependent proteolytic activity. This Solanum lycopersicum (Tomato) protein is Proteasome subunit alpha type-7 (PAD1).